Consider the following 129-residue polypeptide: SOSS complex subunit C homolog (129 aa).

The interval Arg-105 to Lys-129 is disordered.

It belongs to the SOSS-C family.

This chain is SOSS complex subunit C homolog, found in Drosophila simulans (Fruit fly).